Here is a 274-residue protein sequence, read N- to C-terminus: NH(3)-dependent NAD(+) synthetase (274 aa).

46-53 contacts ATP; it reads GISGGQDS. Asp52 is a Mg(2+) binding site. Residue Arg140 participates in deamido-NAD(+) binding. Position 160 (Thr160) interacts with ATP. Mg(2+) is bound at residue Glu165. Lys173 and Asp180 together coordinate deamido-NAD(+). The ATP site is built by Lys189 and Thr211. 260-261 serves as a coordination point for deamido-NAD(+); it reads HK.

It belongs to the NAD synthetase family. As to quaternary structure, homodimer.

The catalysed reaction is deamido-NAD(+) + NH4(+) + ATP = AMP + diphosphate + NAD(+) + H(+). Its pathway is cofactor biosynthesis; NAD(+) biosynthesis; NAD(+) from deamido-NAD(+) (ammonia route): step 1/1. Functionally, catalyzes the ATP-dependent amidation of deamido-NAD to form NAD. Uses ammonia as a nitrogen source. The sequence is that of NH(3)-dependent NAD(+) synthetase from Streptococcus pyogenes serotype M2 (strain MGAS10270).